The chain runs to 243 residues: CRISPR-associated endoribonuclease Cas6 (243 aa).

This sequence belongs to the CRISPR-associated endoribonuclease Cas6 family. As to quaternary structure, part of the Csm effector complex that includes at least Cas10(1), Csm2(3), Csm3(5), Csm4(1); the presence of Csm5 and Cas6 may depend on the processing state of precursor crRNA. Csm with a precursor crRNA does not include Csm5, while Cas6, the enzyme probably involved in pre-crRNA processing, is found associated with a subset of the Csm complex that is probably in the process of pre-crRNA maturation. The Csm complex is elongated and slightly twisted with a maximal length of 215 Angstroms and a diameter of 75-80 Angstroms. It has been modeled to have a central protein filamant of Csm3 subunits along which the dsRNA helix of paired crRNA and target RNA binds. The filament is capped at one end by Cas10 and Csm4 and at the other end by Csm5; ssDNA is thought to bind to the N-terminal HD domain of Cas10.

Functionally, CRISPR (clustered regularly interspaced short palindromic repeat) is an adaptive immune system that provides protection against mobile genetic elements (viruses, transposable elements and conjugative plasmids). CRISPR clusters contain spacers, sequences complementary to antecedent mobile elements, and target invading nucleic acids. CRISPR clusters are transcribed and processed into CRISPR RNA (crRNA). The type III-A Csm effector complex binds crRNA and acts as a crRNA-guided RNase, DNase and cyclic oligoadenylate synthase; binding of target RNA cognate to the crRNA is required for all activities. In a heterologous host this Csm effector complex restricts ssRNA phage MS2, suggesting it may target RNA viruses in vivo. In terms of biological role, csm functions as a non-specific ssDNase. Base-pairing between crRNA and target RNA to form a ternary Csm complex activates a ssDNase activity; target RNA cleavage suppresses the ssDNase, a temporal control that prevents uncontrolled DNA degradation. Viral RNA transcripts probably tether the Csm complex to the viral genome, recruiting Cas10 ssDNA activity which is able to degrade DNA in the transcription bubble, spatially controlling the DNase activity. Its function is as follows. This protein processes pre-crRNA into individual crRNA units. The polypeptide is CRISPR-associated endoribonuclease Cas6 (Streptococcus thermophilus).